A 391-amino-acid chain; its full sequence is Succinate--CoA ligase [ADP-forming] subunit beta (391 aa).

The 239-residue stretch at 9 to 247 folds into the ATP-grasp domain; sequence KDILAKYGVA…IAEEDPLEVE (239 aa). Residues K49, 56–58, E102, A105, and E110 contribute to the ATP site; that span reads GRG. Residues N202 and D216 each contribute to the Mg(2+) site. Residues N267 and 324-326 each bind substrate; that span reads GIL.

It belongs to the succinate/malate CoA ligase beta subunit family. Heterotetramer of two alpha and two beta subunits. Requires Mg(2+) as cofactor.

The enzyme catalyses succinate + ATP + CoA = succinyl-CoA + ADP + phosphate. The catalysed reaction is GTP + succinate + CoA = succinyl-CoA + GDP + phosphate. The protein operates within carbohydrate metabolism; tricarboxylic acid cycle; succinate from succinyl-CoA (ligase route): step 1/1. Its function is as follows. Succinyl-CoA synthetase functions in the citric acid cycle (TCA), coupling the hydrolysis of succinyl-CoA to the synthesis of either ATP or GTP and thus represents the only step of substrate-level phosphorylation in the TCA. The beta subunit provides nucleotide specificity of the enzyme and binds the substrate succinate, while the binding sites for coenzyme A and phosphate are found in the alpha subunit. The chain is Succinate--CoA ligase [ADP-forming] subunit beta from Acidobacterium capsulatum (strain ATCC 51196 / DSM 11244 / BCRC 80197 / JCM 7670 / NBRC 15755 / NCIMB 13165 / 161).